Consider the following 276-residue polypeptide: Protein canopy homolog 3 (276 aa).

An N-terminal signal peptide occupies residues 1–26; sequence MESMSELAPRCLLFPLLLLLPLLLLP. Residues 47–269 form the Saposin B-type domain; that stretch reads SKCEVCKYVA…EGVQKASPLP (223 aa). 3 cysteine pairs are disulfide-bonded: C49-C206, C52-C194, and C104-C166. A glycan (N-linked (GlcNAc...) asparagine) is linked at N153. The stretch at 153 to 179 forms a coiled coil; sequence NETSAEVADLKKQCDVLVEEFEEVIED. Residues 218 to 276 are disordered; it reads IASLGGKKSKKKRSGVKGSSSGSSKQRKELGGLGEDANAEEEEGVQKASPLPHSPPDEL.

Belongs to the canopy family. Interacts with HSP90B1; this interaction is disrupted in the presence of ATP. Interacts with TLR1, TLR2, TLR4 and TLR9. Strongest interaction with TLR4.

It is found in the endoplasmic reticulum. In terms of biological role, toll-like receptor (TLR)-specific co-chaperone for HSP90B1. Required for proper TLR folding, except that of TLR3, and hence controls TLR exit from the endoplasmic reticulum. Consequently, required for both innate and adaptive immune responses. In Mus musculus (Mouse), this protein is Protein canopy homolog 3 (Cnpy3).